Consider the following 77-residue polypeptide: MADVLERVTKIIVDRLGVDESQVTLEASFKDDLGADSLDIVELVMELEDEFNMEISDEEAEKIVTVGDAVNYIKSRL.

Residues 2–77 (ADVLERVTKI…DAVNYIKSRL (76 aa)) enclose the Carrier domain. Ser37 is subject to O-(pantetheine 4'-phosphoryl)serine.

It belongs to the acyl carrier protein (ACP) family. 4'-phosphopantetheine is transferred from CoA to a specific serine of apo-ACP by AcpS. This modification is essential for activity because fatty acids are bound in thioester linkage to the sulfhydryl of the prosthetic group.

The protein localises to the cytoplasm. Its pathway is lipid metabolism; fatty acid biosynthesis. In terms of biological role, carrier of the growing fatty acid chain in fatty acid biosynthesis. This is Acyl carrier protein from Geobacillus kaustophilus (strain HTA426).